We begin with the raw amino-acid sequence, 142 residues long: Probable transport accessory protein MmpS5 (142 aa).

Residues 7–26 traverse the membrane as a helical segment; that stretch reads RAWIPLLILVVVAIAGFTVQ.

Belongs to the MmpS family.

It is found in the cell membrane. The protein is Probable transport accessory protein MmpS5 (mmpS5) of Mycobacterium bovis (strain ATCC BAA-935 / AF2122/97).